A 414-amino-acid chain; its full sequence is Serine/threonine transporter SstT (414 aa).

A run of 8 helical transmembrane segments spans residues 16–36 (GSLV…AWVS), 46–66 (LGTL…LMLV), 84–104 (ILFL…VFSF), 143–163 (ALLN…GFAL), 180–200 (AVTF…FGLV), 219–239 (LVVL…LLVF), 300–320 (MAGA…TLGV), and 332–352 (VVAS…LLLI).

Belongs to the dicarboxylate/amino acid:cation symporter (DAACS) (TC 2.A.23) family.

The protein localises to the cell inner membrane. The catalysed reaction is L-serine(in) + Na(+)(in) = L-serine(out) + Na(+)(out). It carries out the reaction L-threonine(in) + Na(+)(in) = L-threonine(out) + Na(+)(out). Its function is as follows. Involved in the import of serine and threonine into the cell, with the concomitant import of sodium (symport system). This is Serine/threonine transporter SstT from Salmonella arizonae (strain ATCC BAA-731 / CDC346-86 / RSK2980).